A 401-amino-acid polypeptide reads, in one-letter code: Serine/threonine transporter SstT (401 aa).

8 consecutive transmembrane segments (helical) span residues 17–37, 40–60, 78–98, 138–158, 179–199, 212–232, 295–315, and 336–356; these read IGIG…ITVI, FGSL…LTLV, VICL…GASY, ALAT…GLAF, VVGW…FDTI, LLLL…NPLI, MAGA…TLGI, and ASGV…LFGI.

This sequence belongs to the dicarboxylate/amino acid:cation symporter (DAACS) (TC 2.A.23) family.

The protein resides in the cell membrane. The catalysed reaction is L-serine(in) + Na(+)(in) = L-serine(out) + Na(+)(out). The enzyme catalyses L-threonine(in) + Na(+)(in) = L-threonine(out) + Na(+)(out). In terms of biological role, involved in the import of serine and threonine into the cell, with the concomitant import of sodium (symport system). In Streptococcus suis (strain 98HAH33), this protein is Serine/threonine transporter SstT.